Consider the following 2641-residue polypeptide: Prosolanapyrone synthase (2641 aa).

Residues 14 to 440 (PEPIAIVGMG…GANGHCIIDD (427 aa)) form the Ketosynthase family 3 (KS3) domain. Catalysis depends on for beta-ketoacyl synthase activity residues cysteine 187, histidine 323, and histidine 363. Residues 456–515 (SIGHINGHTNGHTNGHTNGHTNGHTNGHTNGHTNGAHASDGHNGHHQNGMNGNSASHMSE) form a disordered region. Residues 461–490 (NGHTNGHTNGHTNGHTNGHTNGHTNGHTNG) show a composition bias toward low complexity. The interval 619–920 (FVFTGQGAQW…KGPVGQISRS (302 aa)) is malonyl-CoA:ACP transacylase (MAT). An N-terminal hotdog fold region spans residues 1011–1149 (HDLLGSKLPG…GRVRVIAGTS (139 aa)). Residues 1011 to 1309 (HDLLGSKLPG…GNLRCVTYTE (299 aa)) form a dehydratase (DH) domain region. Residues 1011–1313 (HDLLGSKLPG…CVTYTEVLPS (303 aa)) form the PKS/mFAS DH domain. The active-site Proton acceptor; for dehydratase activity is the histidine 1043. Residues 1161–1313 (ARTLDTKAWY…CVTYTEVLPS (153 aa)) are C-terminal hotdog fold. Residue aspartate 1227 is the Proton donor; for dehydratase activity of the active site. The tract at residues 1477 to 1665 (TGAYPQLVRF…GAELVLDDYP (189 aa)) is methyltransferase (MT) domain. The segment at 1894–2206 (GLLTSLYFKP…KGTHVGKLVV (313 aa)) is enoyl reductase (ER) domain. Residues 2231–2408 (NYLITGGLGG…STVSFGLIRD (178 aa)) form a ketoreductase (KR) domain region. Residues 2561 to 2639 (RTVALVTDAI…ILANKIVDGA (79 aa)) form the Carrier domain. At serine 2598 the chain carries O-(pantetheine 4'-phosphoryl)serine.

Its pathway is phytotoxin biosynthesis. Its function is as follows. Prosolanapyrone synthase; part of the gene cluster that mediates the biosynthesis of the phytotoxin solanapyrone, a causal agent of early blight disease of potato and tomato. The prosolanapyrone synthase sol1 is a polyketide synthase that produces the octaketide desmethylprosolanapyrone I via sequential condensations of 7 malonyl-CoA units with one acetyl-CoA unit, and one methylation step. The octaketide backbone is further methylated by the sol2 O-methyltransferase to yield prosolanapyrone I. Prosolanapyrone I is hydroxylated to prosolanapyrone II by the cytochrome P450 monooxygenase sol6. The solanapyrone synthase sol5 then catalyzes the oxidation of prosolanapyrone II and the subsequent Diels Alder cycloisomerization of the product prosolanapyrone III to solanapyrones A and D. Solanapyrones A and D are then converted into solanapyrones B and E, respectively, by the sol3 dehydrogenase. The sequence is that of Prosolanapyrone synthase (sol1) from Alternaria solani.